An 870-amino-acid chain; its full sequence is Probable disease resistance protein At1g59620 (870 aa).

The region spanning 123–432 is the NB-ARC domain; that stretch reads DKRNMRQTFS…AAEGMPRPRY (310 aa). ATP is bound at residue 167-174; it reads GMGGIGKT. LRR repeat units lie at residues 543-567, 568-590, 703-726, 735-758, 759-786, and 808-833; these read LQLM…IGLL, IHLR…MQNL, MSGI…IYMP, PWHL…ILEK, LLQL…GFPQ, and MPRL…KFIT.

The protein belongs to the disease resistance NB-LRR family.

In terms of biological role, probable disease resistance protein. The protein is Probable disease resistance protein At1g59620 of Arabidopsis thaliana (Mouse-ear cress).